The following is a 57-amino-acid chain: Beta-defensin 3 (57 aa).

Gln16 is modified (pyrrolidone carboxylic acid). Intrachain disulfides connect Cys24–Cys53, Cys31–Cys46, and Cys36–Cys54.

It belongs to the beta-defensin family. Neutrophilic granules.

Its subcellular location is the secreted. Has bactericidal activity. Active against E.coli ML35 and S.aureus 502A. The protein is Beta-defensin 3 (DEFB3) of Bos taurus (Bovine).